The following is a 78-amino-acid chain: ATP synthase subunit c (78 aa).

2 helical membrane-spanning segments follow: residues 16–36 (LATL…ASFL) and 57–77 (MALA…ILFV).

This sequence belongs to the ATPase C chain family. As to quaternary structure, F-type ATPases have 2 components, F(1) - the catalytic core - and F(0) - the membrane proton channel. F(1) has five subunits: alpha(3), beta(3), gamma(1), delta(1), epsilon(1). F(0) has three main subunits: a(1), b(2) and c(10-14). The alpha and beta chains form an alternating ring which encloses part of the gamma chain. F(1) is attached to F(0) by a central stalk formed by the gamma and epsilon chains, while a peripheral stalk is formed by the delta and b chains.

It is found in the cell inner membrane. F(1)F(0) ATP synthase produces ATP from ADP in the presence of a proton or sodium gradient. F-type ATPases consist of two structural domains, F(1) containing the extramembraneous catalytic core and F(0) containing the membrane proton channel, linked together by a central stalk and a peripheral stalk. During catalysis, ATP synthesis in the catalytic domain of F(1) is coupled via a rotary mechanism of the central stalk subunits to proton translocation. In terms of biological role, key component of the F(0) channel; it plays a direct role in translocation across the membrane. A homomeric c-ring of between 10-14 subunits forms the central stalk rotor element with the F(1) delta and epsilon subunits. In Hyphomonas neptunium (strain ATCC 15444), this protein is ATP synthase subunit c.